Consider the following 201-residue polypeptide: Small ribosomal subunit protein uS4c (201 aa).

Positions 15-43 are disordered; that stretch reads LGALPGLTSKRPTPGSDLRNQSRSGKRSQ. An S4 RNA-binding domain is found at 89 to 149; that stretch reads MRLDNILFRL…DEQKSRALIQ (61 aa).

This sequence belongs to the universal ribosomal protein uS4 family. As to quaternary structure, part of the 30S ribosomal subunit. Contacts protein S5. The interaction surface between S4 and S5 is involved in control of translational fidelity.

It is found in the plastid. Its subcellular location is the chloroplast. Its function is as follows. One of the primary rRNA binding proteins, it binds directly to 16S rRNA where it nucleates assembly of the body of the 30S subunit. With S5 and S12 plays an important role in translational accuracy. The protein is Small ribosomal subunit protein uS4c (rps4) of Nandina domestica (Heavenly bamboo).